The sequence spans 170 residues: Protein ripply3 (170 aa).

A WRPW motif motif is present at residues 40-43; the sequence is WRPW. Residues 79-114 are ripply homology domain; sequence HPVRLYMPKSKTSEYLQHMGKKVLANFPVQATIHFY. Over residues 143 to 152 the composition is skewed to polar residues; it reads VNSSRGSGDN. Positions 143-170 are disordered; the sequence is VNSSRGSGDNYSVPGGPKRNISSHTGSA.

The protein belongs to the ripply family. As to quaternary structure, interacts with tbx1 and tle4/grg4.

It is found in the nucleus. Its function is as follows. Acts as a transcriptional corepressor. Negative regulator of the transcriptional activity of tbx1 that plays a key role in pharyngeal development. Plays a role in the formation of the anteroposterior (AP) axis during embryonic development; required to establish the posterolateral border of the pre-placodal ectoderm (PPE) acting downstream of the retinoic acid receptor (RAR) signaling. The polypeptide is Protein ripply3 (Xenopus tropicalis (Western clawed frog)).